We begin with the raw amino-acid sequence, 502 residues long: MKYLTKSRVIATIAMLGCLSVSAWAETPTNQPESLTDKALKHEKLGVVVESANHKFAEKYRLQYDSWKATAESTDRSSALEADPRLVVLWAGYAFAKEYNKPRGHYYAVTDVREILRTGAPKDENDGPQPMACWTCKGPDVPRLIEEKGERGYFDPKWAKYGAEIVNSIGCADCHDTTSKAFEEGKPALRVARPHVLRALESVGWRFEDLDKHGKRVAVCSNCHVEYYFKDKKDVTFPWAKGVDVDSIEKYYDESQFTDWTHALSKAPMLKTQHPDFEVWSQGVHGKNGVTCIDCHMPKVKDKDGKVYTEHKIGNPFDRFDATCKTCHEQSKQTLQDRVKEHKAQVKEAMIRLEDQIVKAHFEAKVAWDAGATAEEMQDILMAIRHAQWRWDYSAAGHGNHFHAPDVMLHTIATGLDRVADARAKLGVVLTKHGVETPIVMPDISTREKAQKAVGIDIAKDQAAKDEFLRTVVPQWERQARERGLLPEVTPKSVTTPKVDAK.

Residues 1 to 25 (MKYLTKSRVIATIAMLGCLSVSAWA) form the signal peptide. Position 105 (H105) interacts with heme c. Residues C133, C136, and K137 each contribute to the heme site. C171, C174, H175, C220, C223, and H224 together coordinate heme c. Positions 226, 227, 271, and 273 each coordinate Ca(2+). Y227 provides a ligand contact to substrate. H274 lines the substrate pocket. Heme c is bound by residues H285, C292, C295, H296, H311, C324, C327, H328, and H403. The disordered stretch occupies residues 481–502 (RERGLLPEVTPKSVTTPKVDAK).

Belongs to the cytochrome c-552 family. It depends on Ca(2+) as a cofactor. Requires heme c as cofactor.

Its subcellular location is the periplasm. The enzyme catalyses 6 Fe(III)-[cytochrome c] + NH4(+) + 2 H2O = 6 Fe(II)-[cytochrome c] + nitrite + 8 H(+). It functions in the pathway nitrogen metabolism; nitrate reduction (assimilation). Its function is as follows. Catalyzes the reduction of nitrite to ammonia, consuming six electrons in the process. The chain is Cytochrome c-552 from Haemophilus ducreyi (strain 35000HP / ATCC 700724).